The sequence spans 100 residues: Putative antiporter subunit mnhF2 (100 aa).

3 consecutive transmembrane segments (helical) span residues 6–26 (TNFF…IGLF), 38–58 (VVAF…VSVI), and 62–82 (VSFL…SVSI).

This sequence belongs to the CPA3 antiporters (TC 2.A.63) subunit F family. In terms of assembly, may form a heterooligomeric complex that consists of seven subunits: mnhA2, mnhB2, mnhC2, mnhD2, mnhE2, mnhF2 and mnhG2.

The protein resides in the cell membrane. This chain is Putative antiporter subunit mnhF2 (mnhF2), found in Staphylococcus haemolyticus (strain JCSC1435).